Consider the following 950-residue polypeptide: UvrABC system protein A (950 aa).

Residue 42 to 49 (GLSGSGKS) coordinates ATP. A C4-type zinc finger spans residues 262–289 (CPVCSYSLPELEPRLFSFNNPMGSCPTC). 2 consecutive ABC transporter domains span residues 319–596 (WDKR…EKSV) and 616–945 (VNPG…KYLK). Position 649 to 656 (649 to 656 (GVSGSGKS)) interacts with ATP. The segment at 748–774 (CEACQGDGVIKVEMHFLPDVYVPCEVC) adopts a C4-type zinc-finger fold.

It belongs to the ABC transporter superfamily. UvrA family. Forms a heterotetramer with UvrB during the search for lesions.

The protein localises to the cytoplasm. The UvrABC repair system catalyzes the recognition and processing of DNA lesions. UvrA is an ATPase and a DNA-binding protein. A damage recognition complex composed of 2 UvrA and 2 UvrB subunits scans DNA for abnormalities. When the presence of a lesion has been verified by UvrB, the UvrA molecules dissociate. In Neisseria gonorrhoeae, this protein is UvrABC system protein A.